The sequence spans 335 residues: Pro-cathepsin H (335 aa).

Residues 1–22 (MWATLPLLCAGAWLLGVPVCGA) form the signal peptide. The propeptide at 23–97 (AELCVNSLEK…AEIKHKYLWS (75 aa)) is activation peptide. Residue Asn-101 is glycosylated (N-linked (GlcNAc...) asparagine). 4 disulfide bridges follow: Cys-102/Cys-327, Cys-138/Cys-181, Cys-172/Cys-214, and Cys-272/Cys-322. Residues 106 to 115 (KSNYLRGTGP) constitute a propeptide that is removed on maturation. Residue Cys-141 is part of the active site. Asn-230 carries an N-linked (GlcNAc...) asparagine glycan. Residues His-281 and Asn-301 contribute to the active site.

This sequence belongs to the peptidase C1 family. Composed of a mini chain and a large chain. The large chain may be split into heavy and light chain. All chains are held together by disulfide bonds.

Its subcellular location is the lysosome. It carries out the reaction Hydrolysis of proteins, acting as an aminopeptidase (notably, cleaving Arg-|-Xaa bonds) as well as an endopeptidase.. Important for the overall degradation of proteins in lysosomes. This chain is Pro-cathepsin H (CTSH), found in Homo sapiens (Human).